Consider the following 139-residue polypeptide: Deoxyuridine 5'-triphosphate nucleotidohydrolase (139 aa).

Residues Arg58–Gly60, Asn71, Leu75–Asp77, and Met85 contribute to the substrate site.

This sequence belongs to the dUTPase family. Mg(2+) serves as cofactor.

The enzyme catalyses dUTP + H2O = dUMP + diphosphate + H(+). Its pathway is pyrimidine metabolism; dUMP biosynthesis; dUMP from dCTP (dUTP route): step 2/2. This enzyme is involved in nucleotide metabolism: it produces dUMP, the immediate precursor of thymidine nucleotides and it decreases the intracellular concentration of dUTP so that uracil cannot be incorporated into DNA. This is Deoxyuridine 5'-triphosphate nucleotidohydrolase from Gamma-proteobacterium EBAC31A08.